The chain runs to 108 residues: UPF0060 membrane protein KPN78578_15550 (108 aa).

4 helical membrane passes run Leu-6–Leu-26, Gly-29–Leu-49, Ala-61–Val-81, and Tyr-86–Gly-106.

This sequence belongs to the UPF0060 family.

The protein localises to the cell inner membrane. The protein is UPF0060 membrane protein KPN78578_15550 of Klebsiella pneumoniae subsp. pneumoniae (strain ATCC 700721 / MGH 78578).